A 489-amino-acid polypeptide reads, in one-letter code: Glycogen synthase (489 aa).

An ADP-alpha-D-glucose-binding site is contributed by R20.

Belongs to the glycosyltransferase 1 family. Bacterial/plant glycogen synthase subfamily.

It catalyses the reaction [(1-&gt;4)-alpha-D-glucosyl](n) + ADP-alpha-D-glucose = [(1-&gt;4)-alpha-D-glucosyl](n+1) + ADP + H(+). It participates in glycan biosynthesis; glycogen biosynthesis. In terms of biological role, synthesizes alpha-1,4-glucan chains using ADP-glucose. In Chlorobium phaeovibrioides (strain DSM 265 / 1930) (Prosthecochloris vibrioformis (strain DSM 265)), this protein is Glycogen synthase.